Reading from the N-terminus, the 240-residue chain is Uridylate kinase (240 aa).

12-15 (KLSG) contributes to the ATP binding site. An involved in allosteric activation by GTP region spans residues 20–25 (GSQGFG). Gly-54 is a binding site for UMP. ATP-binding residues include Gly-55 and Arg-59. UMP contacts are provided by residues Asp-74 and 135–142 (TGNPYFST). Residues Tyr-168 and Asp-171 each contribute to the ATP site.

This sequence belongs to the UMP kinase family. In terms of assembly, homohexamer.

It is found in the cytoplasm. The enzyme catalyses UMP + ATP = UDP + ADP. The protein operates within pyrimidine metabolism; CTP biosynthesis via de novo pathway; UDP from UMP (UMPK route): step 1/1. Its activity is regulated as follows. Allosterically activated by GTP. Inhibited by UTP. In terms of biological role, catalyzes the reversible phosphorylation of UMP to UDP. In Desulfitobacterium hafniense (strain Y51), this protein is Uridylate kinase.